The chain runs to 294 residues: Diaminopimelate epimerase (294 aa).

Residues Asn-11 and Asn-78 each coordinate substrate. The Proton donor role is filled by Cys-87. Substrate is bound by residues 88-89, Asn-167, Asn-203, and 221-222; these read GN and ER. Residue Cys-230 is the Proton acceptor of the active site. Residue 231–232 participates in substrate binding; the sequence is GT.

Belongs to the diaminopimelate epimerase family. Homodimer.

It localises to the cytoplasm. It catalyses the reaction (2S,6S)-2,6-diaminopimelate = meso-2,6-diaminopimelate. The protein operates within amino-acid biosynthesis; L-lysine biosynthesis via DAP pathway; DL-2,6-diaminopimelate from LL-2,6-diaminopimelate: step 1/1. Catalyzes the stereoinversion of LL-2,6-diaminopimelate (L,L-DAP) to meso-diaminopimelate (meso-DAP), a precursor of L-lysine and an essential component of the bacterial peptidoglycan. The chain is Diaminopimelate epimerase from Mycolicibacterium paratuberculosis (strain ATCC BAA-968 / K-10) (Mycobacterium paratuberculosis).